Here is a 498-residue protein sequence, read N- to C-terminus: MEYLLALDQGTSSSRAIVFNRAGQIVASAQQEFPQHFPQPGWVEHDPFDIWNSQLATCRAALEQAKLSAADMAALGITNQRETTMVWERATGKPIFNAIVWQDRRTEAICESLRAEGLEDEVRKRTGLIIDPYFSATKLRWILDHVDGGRERAARGELAFGTIDSWLVWQLTRGRLHVTDVSNASRTMLWNIHTGEWDADLMRALDIHPSLLPEVHPSAHQFGQTDADWLGASLTIGGIAGDQQSALFGQACFKPGMAKNTYGTGCFMLLNTGDKAVQSHNGLISTAACQSGTKRSYALEGSVFVGGAVVQWLRDGLRAIQRSADVEGLAASVPDSGGVVFVPSFTGLGAPYWDPTAQGAIVGLSRGTTIGHIARAALESIAFQSTALLQAMTRDAVSTISELRVDGGASANNLLLQFQADLLGIPVVRPEIIETTALGAAYLAGIATGFYRDEAEVAQQWRASRTFHPVISRDEAAHRIAQWEMAVAQVRLPTTRGH.

T11 is a binding site for ADP. Positions 11, 12, and 13 each coordinate ATP. Residue T11 participates in sn-glycerol 3-phosphate binding. R15 serves as a coordination point for ADP. Residues R81, E82, Y133, and D242 each coordinate sn-glycerol 3-phosphate. R81, E82, Y133, D242, and Q243 together coordinate glycerol. ADP contacts are provided by T264 and G307. T264, G307, Q311, and G408 together coordinate ATP. ADP-binding residues include G408 and N412.

The protein belongs to the FGGY kinase family.

It carries out the reaction glycerol + ATP = sn-glycerol 3-phosphate + ADP + H(+). It participates in polyol metabolism; glycerol degradation via glycerol kinase pathway; sn-glycerol 3-phosphate from glycerol: step 1/1. With respect to regulation, inhibited by fructose 1,6-bisphosphate (FBP). Functionally, key enzyme in the regulation of glycerol uptake and metabolism. Catalyzes the phosphorylation of glycerol to yield sn-glycerol 3-phosphate. The sequence is that of Glycerol kinase from Ralstonia pickettii (strain 12J).